Reading from the N-terminus, the 644-residue chain is Threonine--tRNA ligase (644 aa).

Positions 1 to 61 constitute a TGS domain; the sequence is MPDIQLPDGS…DQDAEVAIVT (61 aa). The tract at residues 242 to 535 is catalytic; that stretch reads DHRRIGTELE…LIEHYEGKFP (294 aa). Zn(2+) is bound by residues C335, H386, and H512.

The protein belongs to the class-II aminoacyl-tRNA synthetase family. Homodimer. Requires Zn(2+) as cofactor.

It localises to the cytoplasm. It catalyses the reaction tRNA(Thr) + L-threonine + ATP = L-threonyl-tRNA(Thr) + AMP + diphosphate + H(+). Its function is as follows. Catalyzes the attachment of threonine to tRNA(Thr) in a two-step reaction: L-threonine is first activated by ATP to form Thr-AMP and then transferred to the acceptor end of tRNA(Thr). Also edits incorrectly charged L-seryl-tRNA(Thr). This Acidithiobacillus ferrooxidans (strain ATCC 23270 / DSM 14882 / CIP 104768 / NCIMB 8455) (Ferrobacillus ferrooxidans (strain ATCC 23270)) protein is Threonine--tRNA ligase.